Here is a 480-residue protein sequence, read N- to C-terminus: MYCGRYETIGETRGNSLNVFIGAAAGFVAAVALINSGLATSFYSTPVRAVPQVIVPSSLAASSQLPVVPKETNIQVNSAQILYPDSTVKGQERTITILGVCSFLSASLFYIWKQFGMKARTTKPADLQEVSGGRIWSLASTTGSNIGAGKTVRVATRKSPLAMWQAEFIQSELERLWPGITVELQPMSTRGDKILDSPLAKVGGKGLFVKELETALLENRSDIAVHSTKDVPMELPEGLVLGVICKRHDPCDAIVFPKGSNLKSLEDLPHGARVGTSSLRRQCQLLLKRPDLKFLELRGNVNTRLAKLDSGDYDAIILAAAGLKRLGFSDRVLPGETNIIDPNVMCPAAGQGALSIELRTNDPEIAALLEPLHHIPDAVTVACERAMNRRLNGGCQVPISGFAQLKDGQLRMEARVGSVTGKGPLIIQSKTFRLPWSGRTWPQLQKESEALGVEVADMLLADGAQAYLDEAYASRTLGWA.

Residues 1-139 constitute a chloroplast transit peptide; the sequence is MYCGRYETIG…VSGGRIWSLA (139 aa). S-(dipyrrolylmethanemethyl)cysteine is present on Cys-395.

Belongs to the HMBS family. Requires dipyrromethane as cofactor.

It localises to the plastid. The protein resides in the chloroplast. It carries out the reaction 4 porphobilinogen + H2O = hydroxymethylbilane + 4 NH4(+). It functions in the pathway porphyrin-containing compound metabolism; protoporphyrin-IX biosynthesis; coproporphyrinogen-III from 5-aminolevulinate: step 2/4. Its pathway is porphyrin-containing compound metabolism; chlorophyll biosynthesis. Its function is as follows. Tetrapolymerization of the monopyrrole PBG into the hydroxymethylbilane pre-uroporphyrinogen in several discrete steps. The polypeptide is Porphobilinogen deaminase, chloroplastic (Euglena gracilis).